Here is a 177-residue protein sequence, read N- to C-terminus: Large ribosomal subunit protein uL6 (177 aa).

This sequence belongs to the universal ribosomal protein uL6 family. In terms of assembly, part of the 50S ribosomal subunit.

Functionally, this protein binds to the 23S rRNA, and is important in its secondary structure. It is located near the subunit interface in the base of the L7/L12 stalk, and near the tRNA binding site of the peptidyltransferase center. The protein is Large ribosomal subunit protein uL6 of Albidiferax ferrireducens (strain ATCC BAA-621 / DSM 15236 / T118) (Rhodoferax ferrireducens).